Reading from the N-terminus, the 838-residue chain is Probable inorganic carbon transporter subunit DabA (838 aa).

Cysteine 353, aspartate 355, histidine 537, and cysteine 552 together coordinate Zn(2+).

This sequence belongs to the inorganic carbon transporter (TC 9.A.2) DabA family. Forms a complex with DabB. It depends on Zn(2+) as a cofactor.

It localises to the cell membrane. Functionally, part of an energy-coupled inorganic carbon pump. The chain is Probable inorganic carbon transporter subunit DabA from Roseiflexus sp. (strain RS-1).